Consider the following 496-residue polypeptide: Aspartyl/glutamyl-tRNA(Asn/Gln) amidotransferase subunit B (496 aa).

Residues 475-496 are disordered; sequence TGGSADPSKVNTLLREQLEDKK.

This sequence belongs to the GatB/GatE family. GatB subfamily. As to quaternary structure, heterotrimer of A, B and C subunits.

It catalyses the reaction L-glutamyl-tRNA(Gln) + L-glutamine + ATP + H2O = L-glutaminyl-tRNA(Gln) + L-glutamate + ADP + phosphate + H(+). The catalysed reaction is L-aspartyl-tRNA(Asn) + L-glutamine + ATP + H2O = L-asparaginyl-tRNA(Asn) + L-glutamate + ADP + phosphate + 2 H(+). Functionally, allows the formation of correctly charged Asn-tRNA(Asn) or Gln-tRNA(Gln) through the transamidation of misacylated Asp-tRNA(Asn) or Glu-tRNA(Gln) in organisms which lack either or both of asparaginyl-tRNA or glutaminyl-tRNA synthetases. The reaction takes place in the presence of glutamine and ATP through an activated phospho-Asp-tRNA(Asn) or phospho-Glu-tRNA(Gln). The sequence is that of Aspartyl/glutamyl-tRNA(Asn/Gln) amidotransferase subunit B from Haloquadratum walsbyi (strain DSM 16790 / HBSQ001).